The sequence spans 283 residues: Thymidylate synthase (283 aa).

Arg-22 provides a ligand contact to dUMP. The active-site Nucleophile is the Cys-160. Residues 180–183, Asn-191, and 221–223 each bind dUMP; these read RSAD and HIY. Residue Asp-183 participates in (6R)-5,10-methylene-5,6,7,8-tetrahydrofolate binding. Ser-282 is a (6R)-5,10-methylene-5,6,7,8-tetrahydrofolate binding site.

The protein belongs to the thymidylate synthase family. Bacterial-type ThyA subfamily. Homodimer.

It localises to the cytoplasm. The catalysed reaction is dUMP + (6R)-5,10-methylene-5,6,7,8-tetrahydrofolate = 7,8-dihydrofolate + dTMP. It participates in pyrimidine metabolism; dTTP biosynthesis. Its function is as follows. Catalyzes the reductive methylation of 2'-deoxyuridine-5'-monophosphate (dUMP) to 2'-deoxythymidine-5'-monophosphate (dTMP) while utilizing 5,10-methylenetetrahydrofolate (mTHF) as the methyl donor and reductant in the reaction, yielding dihydrofolate (DHF) as a by-product. This enzymatic reaction provides an intracellular de novo source of dTMP, an essential precursor for DNA biosynthesis. The protein is Thymidylate synthase of Glaesserella parasuis serovar 5 (strain SH0165) (Haemophilus parasuis).